We begin with the raw amino-acid sequence, 382 residues long: UDP-4-amino-4-deoxy-L-arabinose--oxoglutarate aminotransferase (382 aa).

Residue lysine 183 is modified to N6-(pyridoxal phosphate)lysine.

This sequence belongs to the DegT/DnrJ/EryC1 family. ArnB subfamily. As to quaternary structure, homodimer. The cofactor is pyridoxal 5'-phosphate.

The enzyme catalyses UDP-4-amino-4-deoxy-beta-L-arabinose + 2-oxoglutarate = UDP-beta-L-threo-pentopyranos-4-ulose + L-glutamate. Its pathway is nucleotide-sugar biosynthesis; UDP-4-deoxy-4-formamido-beta-L-arabinose biosynthesis; UDP-4-deoxy-4-formamido-beta-L-arabinose from UDP-alpha-D-glucuronate: step 2/3. It functions in the pathway bacterial outer membrane biogenesis; lipopolysaccharide biosynthesis. Catalyzes the conversion of UDP-4-keto-arabinose (UDP-Ara4O) to UDP-4-amino-4-deoxy-L-arabinose (UDP-L-Ara4N). The modified arabinose is attached to lipid A and is required for resistance to polymyxin and cationic antimicrobial peptides. This is UDP-4-amino-4-deoxy-L-arabinose--oxoglutarate aminotransferase from Pseudomonas aeruginosa (strain UCBPP-PA14).